The following is a 310-amino-acid chain: Acetyl-coenzyme A carboxylase carboxyl transferase subunit beta, chloroplastic (310 aa).

The CoA carboxyltransferase N-terminal domain occupies 47–310 (LWARCDNCGN…LYLSVPYNKN (264 aa)). The Zn(2+) site is built by C51, C54, C70, and C73. Residues 51-73 (CDNCGNMLYVKFLKQNRSVCEEC) form a C4-type zinc finger.

Belongs to the AccD/PCCB family. Acetyl-CoA carboxylase is a heterohexamer composed of biotin carboxyl carrier protein, biotin carboxylase and 2 subunits each of ACCase subunit alpha and ACCase plastid-coded subunit beta (accD). Zn(2+) is required as a cofactor.

It localises to the plastid. The protein resides in the chloroplast stroma. The catalysed reaction is N(6)-carboxybiotinyl-L-lysyl-[protein] + acetyl-CoA = N(6)-biotinyl-L-lysyl-[protein] + malonyl-CoA. Its pathway is lipid metabolism; malonyl-CoA biosynthesis; malonyl-CoA from acetyl-CoA: step 1/1. Functionally, component of the acetyl coenzyme A carboxylase (ACC) complex. Biotin carboxylase (BC) catalyzes the carboxylation of biotin on its carrier protein (BCCP) and then the CO(2) group is transferred by the transcarboxylase to acetyl-CoA to form malonyl-CoA. The chain is Acetyl-coenzyme A carboxylase carboxyl transferase subunit beta, chloroplastic from Adiantum capillus-veneris (Maidenhair fern).